The primary structure comprises 1263 residues: TBC1 domain family member 9B (1263 aa).

2 consecutive GRAM domains span residues 142–209 and 288–356; these read LKMR…EKNA and ECYR…EKAD. Thr-397 is modified (phosphothreonine). A disordered region spans residues 397-449; sequence TPSKQTGSSIGGTKASVSDPAPESLPTPQEASEPPASPSSPLSSPPSFSTQEI. Phosphoserine is present on residues Ser-412, Ser-433, Ser-436, and Ser-464. A compositionally biased stretch (low complexity) spans 422–447; that stretch reads PTPQEASEPPASPSSPLSSPPSFSTQ. The Rab-GAP TBC domain maps to 509–696; sequence GIPESLRGEL…VIVDCFFYEG (188 aa). The helical transmembrane segment at 669–689 threads the bilayer; the sequence is LSWFLTLFLSVMPFESAVVIV. Positions 880–915 constitute an EF-hand domain; that stretch reads HTPVLAGRMFRLLDQNKDSLINFKEFVTGMSGMYHG. Disordered regions lie at residues 977-1002, 1075-1126, and 1139-1159; these read EQQE…PDYR, TTKK…SGDM, and VEGG…DDET. Residues 987 to 1002 show a composition bias toward basic and acidic residues; the sequence is TPERREEKGTSPPDYR. Ser-1254 is modified (phosphoserine).

It localises to the membrane. Functionally, may act as a GTPase-activating protein for Rab family protein(s). The protein is TBC1 domain family member 9B (Tbc1d9b) of Mus musculus (Mouse).